We begin with the raw amino-acid sequence, 120 residues long: Ribonuclease P protein component (120 aa).

This sequence belongs to the RnpA family. As to quaternary structure, consists of a catalytic RNA component (M1 or rnpB) and a protein subunit.

The catalysed reaction is Endonucleolytic cleavage of RNA, removing 5'-extranucleotides from tRNA precursor.. RNaseP catalyzes the removal of the 5'-leader sequence from pre-tRNA to produce the mature 5'-terminus. It can also cleave other RNA substrates such as 4.5S RNA. The protein component plays an auxiliary but essential role in vivo by binding to the 5'-leader sequence and broadening the substrate specificity of the ribozyme. This is Ribonuclease P protein component from Latilactobacillus sakei subsp. sakei (strain 23K) (Lactobacillus sakei subsp. sakei).